The chain runs to 505 residues: Phosphomevalonate kinase, peroxisomal (505 aa).

Ala-2 is modified (N-acetylalanine). Residues 57–65 carry the Peroxisomal targeting signal PTS2 motif; that stretch reads DVKLTSPQL. 177–187 provides a ligand contact to ATP; sequence VAKTGLGSSAA.

It belongs to the GHMP kinase family. Mevalonate kinase subfamily.

The protein localises to the peroxisome. The catalysed reaction is (R)-5-phosphomevalonate + ATP = (R)-5-diphosphomevalonate + ADP. Its pathway is isoprenoid biosynthesis; isopentenyl diphosphate biosynthesis via mevalonate pathway; isopentenyl diphosphate from (R)-mevalonate: step 2/3. This is Phosphomevalonate kinase, peroxisomal from Arabidopsis thaliana (Mouse-ear cress).